The following is a 135-amino-acid chain: Flagellar assembly factor FliW 1 (135 aa).

The protein belongs to the FliW family. In terms of assembly, interacts with translational regulator CsrA and flagellin(s).

The protein localises to the cytoplasm. Its function is as follows. Acts as an anti-CsrA protein, binds CsrA and prevents it from repressing translation of its target genes, one of which is flagellin. Binds to flagellin and participates in the assembly of the flagellum. This chain is Flagellar assembly factor FliW 1, found in Helicobacter pylori (strain HPAG1).